Here is a 520-residue protein sequence, read N- to C-terminus: Probable E3 ubiquitin-protein ligase XBOS33 (520 aa).

ANK repeat units follow at residues 44–73 (GLNS…DVNV), 77–106 (CGQT…NVTR), 111–140 (SGRT…PSAP), 185–214 (GGVT…NVSA), and 228–258 (AGST…KLTL). An RING-type zinc finger spans residues 327–377 (CAVCLERSCSVAAEGCCHEFCIKCALYLCSTSNTRVEFTGPPGSIPCPLCR). Over residues 467–479 (QDGSEVQSPQPSH) the composition is skewed to polar residues. Residues 467-493 (QDGSEVQSPQPSHCASMEMDKREQQDL) form a disordered region. Basic and acidic residues predominate over residues 484 to 493 (EMDKREQQDL).

The enzyme catalyses S-ubiquitinyl-[E2 ubiquitin-conjugating enzyme]-L-cysteine + [acceptor protein]-L-lysine = [E2 ubiquitin-conjugating enzyme]-L-cysteine + N(6)-ubiquitinyl-[acceptor protein]-L-lysine.. It participates in protein modification; protein ubiquitination. The sequence is that of Probable E3 ubiquitin-protein ligase XBOS33 (XBOS33) from Oryza sativa subsp. japonica (Rice).